A 984-amino-acid polypeptide reads, in one-letter code: Putative formate dehydrogenase SAR2393 (984 aa).

Residues 3–79 (EHLVVTLDGK…PMTVNTVNND (77 aa)) form the 2Fe-2S ferredoxin-type domain. The [2Fe-2S] cluster site is built by cysteine 37, cysteine 48, cysteine 51, and cysteine 63. Positions 79 to 119 (DVKDAQKEALDRILEKHMLYCTVCDYNNGDCEIHNTMDAWG) constitute a 4Fe-4S His(Cys)3-ligated-type domain. Histidine 95, cysteine 99, cysteine 102, cysteine 109, cysteine 147, cysteine 150, cysteine 153, cysteine 157, cysteine 190, cysteine 193, cysteine 196, cysteine 200, cysteine 264, cysteine 267, cysteine 271, and cysteine 299 together coordinate [4Fe-4S] cluster. 4Fe-4S ferredoxin-type domains lie at 138–165 (PFYR…LNET) and 181–211 (NDVP…VNME). The tract at residues 252-984 (MRKERIKKTK…YVFPGNQVDK (733 aa)) is formate dehydrogenase. The 4Fe-4S Mo/W bis-MGD-type domain maps to 257–313 (IKKTKTVCTYCGVGCSFEVWTKDREILKVQPSHDSPANKIATCVKGKFSWGHINSDQ).

This sequence in the C-terminal section; belongs to the prokaryotic molybdopterin-containing oxidoreductase family. It depends on [2Fe-2S] cluster as a cofactor. Requires [4Fe-4S] cluster as cofactor. Mo-bis(molybdopterin guanine dinucleotide) is required as a cofactor.

The enzyme catalyses formate + NAD(+) = CO2 + NADH. The sequence is that of Putative formate dehydrogenase SAR2393 from Staphylococcus aureus (strain MRSA252).